Reading from the N-terminus, the 260-residue chain is Fibronectin type III domain-containing protein 5 (260 aa).

A disordered region spans residues 1-56; it reads MQAARGGAGRPERPGRPGRGPERERERPPGAGAASPCAAPGLPAGGATIHPGSPSA. The span at 10-28 shows a compositional bias: basic and acidic residues; sequence RPERPGRPGRGPERERERP. Residues 29-56 show a composition bias toward low complexity; that stretch reads PGAGAASPCAAPGLPAGGATIHPGSPSA. In terms of domain architecture, Fibronectin type-III spans 84-175; that stretch reads APVNVTVRHL…EPVLFKTPRE (92 aa). N-linked (GlcNAc...) asparagine glycosylation is found at asparagine 87 and asparagine 132. The helical transmembrane segment at 201–221 threads the bilayer; it reads GEVLIIVVVLFMWAGVIALFC. Residues 230-241 are compositionally biased toward basic and acidic residues; the sequence is NEPNNNKEKTKS. The disordered stretch occupies residues 230-260; the sequence is NEPNNNKEKTKSASETSTPEHQGGGLLRSKI. Over residues 251–260 the composition is skewed to gly residues; it reads QGGGLLRSKI. A Microbody targeting signal motif is present at residues 258 to 260; it reads SKI.

In terms of assembly, dimer; may exist in other oligomeric forms. In terms of processing, the extracellular domain is cleaved and released from the cell membrane. N-Glycosylated. As to expression, widely expressed, with highest levels in heart. Very low expression, if any, in colon, pancreas and spleen.

The protein resides in the cell membrane. It localises to the peroxisome membrane. It is found in the secreted. Mediates beneficial effects of muscular exercise. Induces browning of white adipose tissue by stimulating UCP1 expression, at least in part, via the nuclear receptor PPARA. The protein is Fibronectin type III domain-containing protein 5 (FNDC5) of Homo sapiens (Human).